Reading from the N-terminus, the 122-residue chain is Large ribosomal subunit protein uL14 (122 aa).

The protein belongs to the universal ribosomal protein uL14 family. In terms of assembly, part of the 50S ribosomal subunit. Forms a cluster with proteins L3 and L19. In the 70S ribosome, L14 and L19 interact and together make contacts with the 16S rRNA in bridges B5 and B8.

Its function is as follows. Binds to 23S rRNA. Forms part of two intersubunit bridges in the 70S ribosome. This chain is Large ribosomal subunit protein uL14, found in Chlorobium limicola (strain DSM 245 / NBRC 103803 / 6330).